A 259-amino-acid chain; its full sequence is UPF0246 protein PFLU_0992 (259 aa).

The protein belongs to the UPF0246 family.

This chain is UPF0246 protein PFLU_0992, found in Pseudomonas fluorescens (strain SBW25).